We begin with the raw amino-acid sequence, 384 residues long: S-adenosylmethionine synthase (384 aa).

Histidine 15 contributes to the ATP binding site. Aspartate 17 contributes to the Mg(2+) binding site. Glutamate 43 contributes to the K(+) binding site. L-methionine contacts are provided by glutamate 56 and glutamine 99. Residues 99-109 (QSPDINQGVDR) form a flexible loop region. Residues 164–166 (DAK), 230–231 (RF), aspartate 239, 245–246 (RK), alanine 262, and lysine 266 each bind ATP. Aspartate 239 is an L-methionine binding site. Position 270 (lysine 270) interacts with L-methionine.

It belongs to the AdoMet synthase family. Homotetramer; dimer of dimers. The cofactor is Mg(2+). Requires K(+) as cofactor.

Its subcellular location is the cytoplasm. It catalyses the reaction L-methionine + ATP + H2O = S-adenosyl-L-methionine + phosphate + diphosphate. Its pathway is amino-acid biosynthesis; S-adenosyl-L-methionine biosynthesis; S-adenosyl-L-methionine from L-methionine: step 1/1. Functionally, catalyzes the formation of S-adenosylmethionine (AdoMet) from methionine and ATP. The overall synthetic reaction is composed of two sequential steps, AdoMet formation and the subsequent tripolyphosphate hydrolysis which occurs prior to release of AdoMet from the enzyme. The sequence is that of S-adenosylmethionine synthase from Yersinia enterocolitica serotype O:8 / biotype 1B (strain NCTC 13174 / 8081).